The primary structure comprises 77 residues: MKSKDTLKWFPAQLPEVRIILGDAVVEVAKQGRPINTRTLLDYIEGNIKKTSWLDNKELLQTAISVLKDNQNLNGKM.

To E.coli YdfK.

This is an uncharacterized protein from Escherichia coli (strain K12).